The following is a 340-amino-acid chain: Solute-binding protein Dde_0634 (340 aa).

The N-terminal stretch at Met1–Ala29 is a signal peptide. Residues Tyr99, Arg172, Thr210 to Asp213, and Tyr235 contribute to the (indol-3-yl)acetate site.

It belongs to the bacterial solute-binding protein 7 family. In terms of assembly, the complex is comprised of an extracytoplasmic solute-binding protein and a heteromeric permease formed by two transmembrane proteins.

It is found in the periplasm. Solute-binding protein that binds indole-3-pyruvate and indole-3-acetate (in vitro). Can also bind D-tryptophan (in vitro), but that is probably not a physiological ligand. Probably part of a tripartite ATP-independent periplasmic (TRAP) transport system that mediates solute transport into the cytoplasm. In Oleidesulfovibrio alaskensis (strain ATCC BAA-1058 / DSM 17464 / G20) (Desulfovibrio alaskensis), this protein is Solute-binding protein Dde_0634.